The sequence spans 219 residues: Small ribosomal subunit protein uS3 (219 aa).

The 69-residue stretch at 38 to 106 (IRKFIEKRLV…RVHINIVEIK (69 aa)) folds into the KH type-2 domain.

This sequence belongs to the universal ribosomal protein uS3 family. Part of the 30S ribosomal subunit. Forms a tight complex with proteins S10 and S14.

Functionally, binds the lower part of the 30S subunit head. Binds mRNA in the 70S ribosome, positioning it for translation. The protein is Small ribosomal subunit protein uS3 of Levilactobacillus brevis (strain ATCC 367 / BCRC 12310 / CIP 105137 / JCM 1170 / LMG 11437 / NCIMB 947 / NCTC 947) (Lactobacillus brevis).